The chain runs to 147 residues: Hemoglobin subunit beta-1 (147 aa).

A Globin domain is found at 3 to 147 (EWTATERTHI…VVSALGRQYH (145 aa)). Heme b contacts are provided by H64 and H93.

It belongs to the globin family. In terms of assembly, hb 1 is a heterotetramer of two alpha-1 and two beta-1 chains. Hb 2 is a heterotetramer of two alpha-2 and two beta-1 chains. In terms of tissue distribution, red blood cells.

Its function is as follows. Involved in oxygen transport from gills to the various peripheral tissues. The protein is Hemoglobin subunit beta-1 (hbb1) of Boreogadus saida (Polar cod).